A 484-amino-acid chain; its full sequence is Sodium/pantothenate symporter (484 aa).

The next 13 helical transmembrane spans lie at 3-23, 45-65, 74-94, 124-144, 162-182, 190-210, 238-258, 273-293, 307-327, 366-386, 397-417, 424-444, and 446-466; these read LGII…AIFA, GFVL…FVGG, LGWV…LGAL, VWLS…VQFI, LLLF…RAVV, TVMI…LGGV, FMAS…HTAV, MLIG…AGAL, VIPT…FLAA, VSYF…FAAL, LFAF…GIYW, GALS…QLGI, and LFNF…FLVG.

It belongs to the sodium:solute symporter (SSF) (TC 2.A.21) family.

Its subcellular location is the cell inner membrane. The enzyme catalyses (R)-pantothenate(in) + Na(+)(in) = (R)-pantothenate(out) + Na(+)(out). Its function is as follows. Catalyzes the sodium-dependent uptake of extracellular pantothenate. This chain is Sodium/pantothenate symporter (panF), found in Haemophilus influenzae (strain ATCC 51907 / DSM 11121 / KW20 / Rd).